A 243-amino-acid polypeptide reads, in one-letter code: 23S rRNA (guanosine-2'-O-)-methyltransferase RlmB (243 aa).

Glycine 196, isoleucine 216, and leucine 225 together coordinate S-adenosyl-L-methionine.

The protein belongs to the class IV-like SAM-binding methyltransferase superfamily. RNA methyltransferase TrmH family. RlmB subfamily. In terms of assembly, homodimer.

The protein resides in the cytoplasm. The enzyme catalyses guanosine(2251) in 23S rRNA + S-adenosyl-L-methionine = 2'-O-methylguanosine(2251) in 23S rRNA + S-adenosyl-L-homocysteine + H(+). In terms of biological role, specifically methylates the ribose of guanosine 2251 in 23S rRNA. In Salmonella typhi, this protein is 23S rRNA (guanosine-2'-O-)-methyltransferase RlmB.